The following is a 416-amino-acid chain: Multifunctional CCA protein (416 aa).

2 residues coordinate ATP: glycine 8 and arginine 11. Glycine 8 and arginine 11 together coordinate CTP. Mg(2+) contacts are provided by aspartate 21 and aspartate 23. The ATP site is built by arginine 91, arginine 137, and arginine 140. Positions 91, 137, and 140 each coordinate CTP. The 102-residue stretch at 228–329 (TGLHTMLVLA…IKLFDKADFW (102 aa)) folds into the HD domain.

It belongs to the tRNA nucleotidyltransferase/poly(A) polymerase family. Bacterial CCA-adding enzyme type 1 subfamily. Monomer. Can also form homodimers and oligomers. Requires Mg(2+) as cofactor. The cofactor is Ni(2+).

The enzyme catalyses a tRNA precursor + 2 CTP + ATP = a tRNA with a 3' CCA end + 3 diphosphate. It catalyses the reaction a tRNA with a 3' CCA end + 2 CTP + ATP = a tRNA with a 3' CCACCA end + 3 diphosphate. In terms of biological role, catalyzes the addition and repair of the essential 3'-terminal CCA sequence in tRNAs without using a nucleic acid template. Adds these three nucleotides in the order of C, C, and A to the tRNA nucleotide-73, using CTP and ATP as substrates and producing inorganic pyrophosphate. tRNA 3'-terminal CCA addition is required both for tRNA processing and repair. Also involved in tRNA surveillance by mediating tandem CCA addition to generate a CCACCA at the 3' terminus of unstable tRNAs. While stable tRNAs receive only 3'-terminal CCA, unstable tRNAs are marked with CCACCA and rapidly degraded. In Shewanella sp. (strain ANA-3), this protein is Multifunctional CCA protein.